The sequence spans 464 residues: Leucine-rich repeat-containing protein 34 (464 aa).

A disordered region spans residues 1–48 (MAAQPPRPVGERSMGSSREAARAPARSPAWASTQASTPGAALAVQRES). A compositionally biased stretch (low complexity) spans 16-32 (SSREAARAPARSPAWAS). LRR repeat units follow at residues 295 to 315 (SLRY…VYLA) and 323 to 345 (TLEV…LSET).

As to quaternary structure, interacts with NPM1 and NCL.

It localises to the nucleus. It is found in the nucleolus. Its subcellular location is the cytoplasm. In terms of biological role, highly expressed in stem cells where it may be involved in regulation of pluripotency. In embryonic stem cells (ESCs), important for normal expression of the pluripotency regulators POU5F1/OCT4 and KLF4. Also important for expression of the ectodermal marker gene NES and the endodermal marker gene GATA4. Promotes stem cell proliferation in vitro. This chain is Leucine-rich repeat-containing protein 34 (LRRC34), found in Homo sapiens (Human).